The following is a 575-amino-acid chain: MRPWTGSWRWIMLILFAWGTLLFYIGGHLVRDNDHPDHSSRELSKILAKLERLKQQNEDLRRMAESLRIPEGPIDQGPASGRIRALEEQLVKAKEQIENYKKQTRNGLGKDHEILRRRIENGAKELWFFLQSELKKLKNLEGNELQRHADEFLSDLGHHERSIMTDLYYLSQTDGAGDWREKEAKDLTELVQRRITYLQNPKDCSKAKKLVCNINKGCGYGCQLHHVVYCFMIAYGTQRTLILESHNWRYATGGWETVFRPVSETCTDRSGVYTGHWSGEIKDKNVQVVELPIVDSLHPRPPYLPLAVPEDLADRLVRVHGDPAVWWVSQFVKYLIRPQPWLEKEIEEATKKLGFKHPVIGVHVRRTDKVGTEAAFHPIEEYMVHVEEHFQLLARRMQVDKKRVYLATDDPSLLKEAKTKYPHYEFISDNSISWSAGLHNRYTENSLRGVILDIHFLSQADFLVCTFSSQVCRVAYEIMQTLHPDASANFHSLDDIYYFGGQNAHNQIAIYPHEPRTADEIPMEPGDIIGVAGNHWDGYSKGVNRKLGRTGLYPSYKVREKIETVKVPHVPEAEK.

At 1–9 (MRPWTGSWR) the chain is on the cytoplasmic side. A helical; Signal-anchor for type II membrane protein transmembrane segment spans residues 10–30 (WIMLILFAWGTLLFYIGGHLV). The Lumenal segment spans residues 31-575 (RDNDHPDHSS…KVPHVPEAEK (545 aa)). Cystine bridges form between Cys204/Cys266, Cys212/Cys230, and Cys218/Cys222. The GT23 domain occupies 206-493 (KAKKLVCNIN…PDASANFHSL (288 aa)). Ser278 carries the phosphoserine modification. Positions 299 to 305 (PRPPYLP) match the SH3-binding motif. Residues 365-366 (RR) are important for donor substrate binding. Residues Cys465 and Cys472 are joined by a disulfide bond. The SH3 domain occupies 502–563 (QNAHNQIAIY…PSYKVREKIE (62 aa)).

Belongs to the glycosyltransferase 23 family. Tyrosine phosphorylated by PKDCC/VLK. As to expression, highest expression found in brain. Also found in heart, lung, spleen and kidney.

Its subcellular location is the golgi apparatus. The protein localises to the golgi stack membrane. The enzyme catalyses N(4)-{beta-D-GlcNAc-(1-&gt;2)-alpha-D-Man-(1-&gt;3)-[beta-D-GlcNAc-(1-&gt;2)-alpha-D-Man-(1-&gt;6)]-beta-D-Man-(1-&gt;4)-beta-D-GlcNAc-(1-&gt;4)-beta-D-GlcNAc}-L-asparaginyl-[protein] + GDP-beta-L-fucose = an N(4)-{beta-D-GlcNAc-(1-&gt;2)-alpha-D-Man-(1-&gt;3)-[beta-D-GlcNAc-(1-&gt;2)-alpha-D-Man-(1-&gt;6)]-beta-D-Man-(1-&gt;4)-beta-D-GlcNAc-(1-&gt;4)-[alpha-L-Fuc-(1-&gt;6)]-beta-D-GlcNAc}-L-asparaginyl-[protein] + GDP + H(+). It functions in the pathway protein modification; protein glycosylation. In terms of biological role, catalyzes the addition of fucose in alpha 1-6 linkage to the first GlcNAc residue, next to the peptide chains in N-glycans. The sequence is that of Alpha-(1,6)-fucosyltransferase (FUT8) from Bos taurus (Bovine).